A 103-amino-acid chain; its full sequence is Small ribosomal subunit protein uS14c (103 aa).

The protein belongs to the universal ribosomal protein uS14 family. In terms of assembly, part of the 30S ribosomal subunit.

Its subcellular location is the plastid. It localises to the chloroplast. In terms of biological role, binds 16S rRNA, required for the assembly of 30S particles. The protein is Small ribosomal subunit protein uS14c of Agrostis stolonifera (Creeping bentgrass).